The sequence spans 427 residues: Glutamate-1-semialdehyde 2,1-aminomutase (427 aa).

At Lys-265 the chain carries N6-(pyridoxal phosphate)lysine.

Belongs to the class-III pyridoxal-phosphate-dependent aminotransferase family. HemL subfamily. As to quaternary structure, homodimer. The cofactor is pyridoxal 5'-phosphate.

The protein localises to the cytoplasm. It carries out the reaction (S)-4-amino-5-oxopentanoate = 5-aminolevulinate. Its pathway is porphyrin-containing compound metabolism; protoporphyrin-IX biosynthesis; 5-aminolevulinate from L-glutamyl-tRNA(Glu): step 2/2. The sequence is that of Glutamate-1-semialdehyde 2,1-aminomutase from Pseudomonas paraeruginosa (strain DSM 24068 / PA7) (Pseudomonas aeruginosa (strain PA7)).